The chain runs to 182 residues: MEKFKEIMDANQMRRALVRISHEILEKNKGVENLCLVGIQRRGVNLAKRIQENIEKIEGVKLPLGILDITFYRDDLSLLSEHPTVNSTRIDFDINNKKIVLVDDVLFTGRTVRAAIEALMDMGRPKMIQLAVLIDRGHRELPIRADYVGKNVPTSRKEIVHVLVDEFDNDNRVIIEQLDREI.

The short motif at 99-111 is the PRPP-binding element; it reads IVLVDDVLFTGRT.

This sequence belongs to the purine/pyrimidine phosphoribosyltransferase family. PyrR subfamily. Homodimer and homohexamer; in equilibrium.

It catalyses the reaction UMP + diphosphate = 5-phospho-alpha-D-ribose 1-diphosphate + uracil. Functionally, regulates transcriptional attenuation of the pyrimidine nucleotide (pyr) operon by binding in a uridine-dependent manner to specific sites on pyr mRNA. This disrupts an antiterminator hairpin in the RNA and favors formation of a downstream transcription terminator, leading to a reduced expression of downstream genes. Its function is as follows. Also displays a weak uracil phosphoribosyltransferase activity which is not physiologically significant. The chain is Bifunctional protein PyrR from Caldicellulosiruptor bescii (strain ATCC BAA-1888 / DSM 6725 / KCTC 15123 / Z-1320) (Anaerocellum thermophilum).